Consider the following 141-residue polypeptide: Large ribosomal subunit protein uL11 (141 aa).

It belongs to the universal ribosomal protein uL11 family. As to quaternary structure, part of the ribosomal stalk of the 50S ribosomal subunit. Interacts with L10 and the large rRNA to form the base of the stalk. L10 forms an elongated spine to which L12 dimers bind in a sequential fashion forming a multimeric L10(L12)X complex. In terms of processing, one or more lysine residues are methylated.

Forms part of the ribosomal stalk which helps the ribosome interact with GTP-bound translation factors. The sequence is that of Large ribosomal subunit protein uL11 from Chlorobium chlorochromatii (strain CaD3).